A 129-amino-acid chain; its full sequence is Protein Turandot A1 (129 aa).

The first 21 residues, 1–21 (MNSSTALMCFALLLISPLCMG), serve as a signal peptide directing secretion. An N-linked (GlcNAc...) asparagine glycan is attached at Asn-49.

This sequence belongs to the Turandot family.

The protein resides in the secreted. In terms of biological role, a humoral factor that plays a role in stress tolerance; gives increased resistance to the lethal effects of bacterial challenge and stress. Regulated by the JAK/STAT pathway and NF-KB-like Relish pathway in the fat body, upd3 in the hemocytes and Mekk1 in response to septic injury and consequent immune response. This Drosophila simulans (Fruit fly) protein is Protein Turandot A1 (TotA1).